Reading from the N-terminus, the 421-residue chain is Subtilisin-like protease 2 (421 aa).

Residues 1–16 form the signal peptide; sequence MQLLNFGLLLLPFVAG. The propeptide occupies 17-122; sequence DLAPQPEPLL…VHPDQHFYLA (106 aa). Positions 36–121 constitute an Inhibitor I9 domain; sequence QYLVTLKEGL…SVHPDQHFYL (86 aa). The Peptidase S8 domain maps to 131–421; sequence RWGLGYMSSK…ERKCKLPKYY (291 aa). The active-site Charge relay system is D169. A glycan (N-linked (GlcNAc...) asparagine) is linked at N192. Residue H201 is the Charge relay system of the active site. 3 N-linked (GlcNAc...) asparagine glycosylation sites follow: N248, N261, and N348. S357 (charge relay system) is an active-site residue. N-linked (GlcNAc...) asparagine glycosylation is present at N388.

It belongs to the peptidase S8 family.

The protein localises to the secreted. Its function is as follows. Secreted subtilisin-like serine protease with keratinolytic activity that contributes to pathogenicity. The protein is Subtilisin-like protease 2 (SUB2) of Trichophyton rubrum (Athlete's foot fungus).